A 79-amino-acid chain; its full sequence is Crassicorin-I (79 aa).

Residues 1-19 form the signal peptide; sequence MKLFLVSIVLVGMLVLAAA. Positions 20-39 are excised as a propeptide; the sequence is RPERDIDSFDEQEEKGFVKR. Cystine bridges form between C43-C76, C45-C69, and C59-C77.

This sequence belongs to the sea anemone type 3 (BDS) potassium channel toxin family. As to expression, highly expressed by the mesenteries. Moderately expressed by the pharynx. Weakly expressed by the gonad and pedal disk. No expression in tentacle.

The protein localises to the secreted. The protein resides in the nematocyst. Peptide with both antimicrobial and neurotoxin activities. Cationic AMP with antibacterial activity against both Gram-positive bacteria (B.subtilis, MIC=11.49 ug/mL) and Gram-negative bacteria (E.coli (MIC=12.21 ug/mL) and S.enterica (MIC=11.95 ug/mL)). Shows no significant antimicrobial activity against bacteria S.aureus and P.aeruginosa, as well as the fungus C.albicans. In vivo, induces reversible paralytic activity towards the shrimp P.paucidens. May act by impairing sodium or potassium channels in the prey. This chain is Crassicorin-I, found in Urticina crassicornis (Mottled anemone).